Consider the following 98-residue polypeptide: NADH-ubiquinone oxidoreductase chain 4L (98 aa).

The next 3 helical transmembrane spans lie at 1 to 21 (MSVV…GLLV), 30 to 50 (LLCL…TVLT), and 61 to 81 (IILL…LVMI).

It belongs to the complex I subunit 4L family. As to quaternary structure, core subunit of respiratory chain NADH dehydrogenase (Complex I) which is composed of 45 different subunits.

The protein resides in the mitochondrion inner membrane. It catalyses the reaction a ubiquinone + NADH + 5 H(+)(in) = a ubiquinol + NAD(+) + 4 H(+)(out). Core subunit of the mitochondrial membrane respiratory chain NADH dehydrogenase (Complex I) which catalyzes electron transfer from NADH through the respiratory chain, using ubiquinone as an electron acceptor. Part of the enzyme membrane arm which is embedded in the lipid bilayer and involved in proton translocation. This is NADH-ubiquinone oxidoreductase chain 4L (MT-ND4L) from Lontra canadensis (North American river otter).